A 108-amino-acid chain; its full sequence is MVKLRLKRIGKKQAPFYRIVAADSRVNRNGQYIELVGTFNPLKDEVKIDKELTLKWLNNGAQPTDTVRSLLSKQGILKALHESKFSKNTQTENKKPVSKKTTKKSKDN.

The segment at 82-108 (ESKFSKNTQTENKKPVSKKTTKKSKDN) is disordered. A compositionally biased stretch (basic residues) spans 96-108 (PVSKKTTKKSKDN).

Belongs to the bacterial ribosomal protein bS16 family.

The protein is Small ribosomal subunit protein bS16 of Mycoplasma capricolum subsp. capricolum (strain California kid / ATCC 27343 / NCTC 10154).